The following is a 354-amino-acid chain: tRNA N6-adenosine threonylcarbamoyltransferase (354 aa).

Fe cation-binding residues include H111 and H115. Substrate contacts are provided by residues 134–138 (LVSGG), D167, G180, and N279. A Fe cation-binding site is contributed by D319.

Belongs to the KAE1 / TsaD family. Requires Fe(2+) as cofactor.

The protein resides in the cytoplasm. The catalysed reaction is L-threonylcarbamoyladenylate + adenosine(37) in tRNA = N(6)-L-threonylcarbamoyladenosine(37) in tRNA + AMP + H(+). In terms of biological role, required for the formation of a threonylcarbamoyl group on adenosine at position 37 (t(6)A37) in tRNAs that read codons beginning with adenine. Is involved in the transfer of the threonylcarbamoyl moiety of threonylcarbamoyl-AMP (TC-AMP) to the N6 group of A37, together with TsaE and TsaB. TsaD likely plays a direct catalytic role in this reaction. This is tRNA N6-adenosine threonylcarbamoyltransferase from Neisseria meningitidis serogroup C / serotype 2a (strain ATCC 700532 / DSM 15464 / FAM18).